The following is a 53-amino-acid chain: UPF0391 membrane protein ECA0470 (53 aa).

Transmembrane regions (helical) follow at residues 4–24 (WGIIFLVIALIAAALGFGGLA) and 30–47 (AAKIVFVVGIILFLVSLF).

This sequence belongs to the UPF0391 family.

The protein resides in the cell membrane. The protein is UPF0391 membrane protein ECA0470 of Pectobacterium atrosepticum (strain SCRI 1043 / ATCC BAA-672) (Erwinia carotovora subsp. atroseptica).